Reading from the N-terminus, the 197-residue chain is Protein LURP-one-related 9 (197 aa).

It belongs to the LOR family.

Its function is as follows. Might be related to the phospholipid scramblase and tubby-like superfamily of membrane tethered transcription factors. This chain is Protein LURP-one-related 9, found in Arabidopsis thaliana (Mouse-ear cress).